Here is a 239-residue protein sequence, read N- to C-terminus: Leucyl/phenylalanyl-tRNA--protein transferase (239 aa).

The protein belongs to the L/F-transferase family.

The protein localises to the cytoplasm. The catalysed reaction is N-terminal L-lysyl-[protein] + L-leucyl-tRNA(Leu) = N-terminal L-leucyl-L-lysyl-[protein] + tRNA(Leu) + H(+). It catalyses the reaction N-terminal L-arginyl-[protein] + L-leucyl-tRNA(Leu) = N-terminal L-leucyl-L-arginyl-[protein] + tRNA(Leu) + H(+). The enzyme catalyses L-phenylalanyl-tRNA(Phe) + an N-terminal L-alpha-aminoacyl-[protein] = an N-terminal L-phenylalanyl-L-alpha-aminoacyl-[protein] + tRNA(Phe). Functionally, functions in the N-end rule pathway of protein degradation where it conjugates Leu, Phe and, less efficiently, Met from aminoacyl-tRNAs to the N-termini of proteins containing an N-terminal arginine or lysine. This chain is Leucyl/phenylalanyl-tRNA--protein transferase, found in Aliivibrio fischeri (strain MJ11) (Vibrio fischeri).